Here is a 98-residue protein sequence, read N- to C-terminus: NADH-ubiquinone oxidoreductase chain 4L (98 aa).

3 helical membrane-spanning segments follow: residues 2–22 (PSISININLAFATALLGMLMF), 29–49 (SLLCLEGMMLSMFILSTLTIL), and 61–81 (ILLLVFAACEAAIGLALLVMV).

This sequence belongs to the complex I subunit 4L family. Core subunit of respiratory chain NADH dehydrogenase (Complex I) which is composed of 45 different subunits.

The protein resides in the mitochondrion inner membrane. The enzyme catalyses a ubiquinone + NADH + 5 H(+)(in) = a ubiquinol + NAD(+) + 4 H(+)(out). Its function is as follows. Core subunit of the mitochondrial membrane respiratory chain NADH dehydrogenase (Complex I) which catalyzes electron transfer from NADH through the respiratory chain, using ubiquinone as an electron acceptor. Part of the enzyme membrane arm which is embedded in the lipid bilayer and involved in proton translocation. In Microcebus simmonsi (Simmons's mouse lemur), this protein is NADH-ubiquinone oxidoreductase chain 4L (MT-ND4L).